A 515-amino-acid chain; its full sequence is MRSFAPWLVSLLGASAVVAAADTESDVISLDQDTFESFMNEHGLVLAEFFAPWCGHCKALAPKYEEAATELKAKNIPLVKVDCTAEEDLCRSQGVEGYPTLKIFRGVDSSKPYQGARQTESIVSYMIKQSLPAVSSVNEENLEEIKTMDKIVVIGYIPSDDQETYQAFEKYAESQRDNYLFAATDDAAIAKSEGVEQPSIVLYKDFDEKKAVYDGEIEQEAIHSWVKSASTPLVGEIGPETYSGYIGAGVPLAYIFAETKEEREKYTEDFKPIAQKHKGAINIATIDAKMFGAHAGNLNLDSQKFPAFAIQDPAKNAKYPYDQAKELNADEVEKFIQDVLDGKVEPSIKSEPVPESQEGPVTVVVAHSYKDLVIDNDKDVLLEFYAPWCGHCKALAPKYDELAALYADHPDLAAKVTIAKIDATANDVPDPITGFPTLRLYPAGAKDSPIEYSGSRTVEDLANFVKENGKHNVDALNVASEETQEGGDVTEAAPSATEAETPAATDDEKAEHDEL.

An N-terminal signal peptide occupies residues 1–20; sequence MRSFAPWLVSLLGASAVVAA. Thioredoxin domains lie at 21 to 132 and 339 to 470; these read ADTE…QSLP and VLDG…ENGK. Catalysis depends on nucleophile residues Cys-54, Cys-57, Cys-389, and Cys-392. Cystine bridges form between Cys-54–Cys-57 and Cys-389–Cys-392. Positions 478–515 are disordered; the sequence is VASEETQEGGDVTEAAPSATEAETPAATDDEKAEHDEL. The segment covering 490 to 504 has biased composition (low complexity); sequence TEAAPSATEAETPAA. Residues 506–515 are compositionally biased toward basic and acidic residues; it reads DDEKAEHDEL. Residues 512-515 carry the Prevents secretion from ER motif; that stretch reads HDEL.

This sequence belongs to the protein disulfide isomerase family.

Its subcellular location is the endoplasmic reticulum lumen. The enzyme catalyses Catalyzes the rearrangement of -S-S- bonds in proteins.. Participates in the folding of proteins containing disulfide bonds, may be involved in glycosylation, prolyl hydroxylation and triglyceride transfer. The polypeptide is Protein disulfide-isomerase (pdiA) (Aspergillus niger).